Consider the following 402-residue polypeptide: tRNA(Met) cytidine acetate ligase (402 aa).

ATP contacts are provided by residues 7–20 (IAEY…HIHH), G102, N171, and R196.

This sequence belongs to the TmcAL family.

It localises to the cytoplasm. The catalysed reaction is cytidine(34) in elongator tRNA(Met) + acetate + ATP = N(4)-acetylcytidine(34) in elongator tRNA(Met) + AMP + diphosphate. Its function is as follows. Catalyzes the formation of N(4)-acetylcytidine (ac(4)C) at the wobble position of elongator tRNA(Met), using acetate and ATP as substrates. First activates an acetate ion to form acetyladenylate (Ac-AMP) and then transfers the acetyl group to tRNA to form ac(4)C34. This chain is tRNA(Met) cytidine acetate ligase, found in Clostridium acetobutylicum (strain ATCC 824 / DSM 792 / JCM 1419 / IAM 19013 / LMG 5710 / NBRC 13948 / NRRL B-527 / VKM B-1787 / 2291 / W).